The chain runs to 381 residues: MLKSQLQQQLKKLKDNNLYRFLRKNNSYNNKNYLDFSSNDYLCLSTNKEIIDAIKEGGLKYGFGSTGSRLTAGDINHQLLEHKIAEFKGTERSLIYSSGYATNVGVISALCKKGDLILSDKLNHASIIDGCKLSKSAVLIYNHCDMDNLIDLIEKNRSSYNNLFIITDGVFSMDGDIAPLDKLKKIADEYNGILIIDDAHGTGVLGNGKGSLKHFNLKPSDNIIQIGTMSKAVGGLGGFVCGIEEVIEYLINTSRSFIYSTSLPPSVVSGCIKSFELIEEGAPTKKLQKNIGLANKIFKEHNLIEENNLTPIYPFIFKEKTMDIAEQLIKNNIFCVGIRYPTVPKGMERLRVSITVGHSEEDFRVLCERINLIIKKKFKGI.

Arginine 20 serves as a coordination point for substrate. Glycine 99–tyrosine 100 provides a ligand contact to pyridoxal 5'-phosphate. Histidine 124 is a substrate binding site. Pyridoxal 5'-phosphate contacts are provided by residues serine 172, aspartate 197–histidine 200, and threonine 228–lysine 231. Lysine 231 is subject to N6-(pyridoxal phosphate)lysine. Threonine 342 is a substrate binding site.

The protein belongs to the class-II pyridoxal-phosphate-dependent aminotransferase family. BioF subfamily. As to quaternary structure, homodimer. Pyridoxal 5'-phosphate is required as a cofactor.

The enzyme catalyses 6-carboxyhexanoyl-[ACP] + L-alanine + H(+) = (8S)-8-amino-7-oxononanoate + holo-[ACP] + CO2. Its pathway is cofactor biosynthesis; biotin biosynthesis. Its function is as follows. Catalyzes the decarboxylative condensation of pimeloyl-[acyl-carrier protein] and L-alanine to produce 8-amino-7-oxononanoate (AON), [acyl-carrier protein], and carbon dioxide. The sequence is that of Putative 8-amino-7-oxononanoate synthase (bioF) from Methanococcus aeolicus (strain ATCC BAA-1280 / DSM 17508 / OCM 812 / Nankai-3).